The following is a 306-amino-acid chain: Putative HTH-type transcriptional regulatory protein Mhun_2548 (306 aa).

The region spanning 132–189 is the HTH cro/C1-type domain; it reads LRELRETRSLSLGDLGQILGVSRRTVAKYEAGMGTTIEIALRIEETFDSGVIEPIDLI. The segment at residues 143-162 is a DNA-binding region (H-T-H motif); that stretch reads LGDLGQILGVSRRTVAKYEA.

The sequence is that of Putative HTH-type transcriptional regulatory protein Mhun_2548 from Methanospirillum hungatei JF-1 (strain ATCC 27890 / DSM 864 / NBRC 100397 / JF-1).